Here is a 255-residue protein sequence, read N- to C-terminus: tRNA-cytidine(32) 2-sulfurtransferase (255 aa).

The PP-loop motif motif lies at 37-42; sequence SGGKDS. [4Fe-4S] cluster is bound by residues Cys-112, Cys-115, and Cys-202.

It belongs to the TtcA family. As to quaternary structure, homodimer. The cofactor is Mg(2+). Requires [4Fe-4S] cluster as cofactor.

The protein resides in the cytoplasm. It carries out the reaction cytidine(32) in tRNA + S-sulfanyl-L-cysteinyl-[cysteine desulfurase] + AH2 + ATP = 2-thiocytidine(32) in tRNA + L-cysteinyl-[cysteine desulfurase] + A + AMP + diphosphate + H(+). It participates in tRNA modification. Its function is as follows. Catalyzes the ATP-dependent 2-thiolation of cytidine in position 32 of tRNA, to form 2-thiocytidine (s(2)C32). The sulfur atoms are provided by the cysteine/cysteine desulfurase (IscS) system. The protein is tRNA-cytidine(32) 2-sulfurtransferase of Citrifermentans bemidjiense (strain ATCC BAA-1014 / DSM 16622 / JCM 12645 / Bem) (Geobacter bemidjiensis).